Here is a 794-residue protein sequence, read N- to C-terminus: Ribonucleoside-diphosphate reductase large subunit (794 aa).

The region spanning 1-92 (MHVIKRDGGQ…VSNLHKETKK (92 aa)) is the ATP-cone domain. Residues 5 to 6 (KR), 11 to 17 (EGVMFDK), Thr53, and Asp57 contribute to the ATP site. Positions 202 and 217 each coordinate GDP. The cysteines at positions 218 and 444 are disulfide-linked. DTTP contacts are provided by residues 226–228 (DSI), Lys243, Arg256, and 263–264 (AG). Asn427 lines the GDP pocket. Asn427 serves as the catalytic Proton acceptor. Residue Cys429 is the Cysteine radical intermediate of the active site. Residues Glu431 and 604–607 (TAST) contribute to the GDP site. Glu431 serves as the catalytic Proton acceptor.

Belongs to the ribonucleoside diphosphate reductase large chain family. In terms of assembly, heterodimer of a large and a small subunit.

It localises to the cytoplasm. The enzyme catalyses a 2'-deoxyribonucleoside 5'-diphosphate + [thioredoxin]-disulfide + H2O = a ribonucleoside 5'-diphosphate + [thioredoxin]-dithiol. Its activity is regulated as follows. Under complex allosteric control mediated by deoxynucleoside triphosphates and ATP binding to separate specificity and activation sites on the M1 subunit. The type of nucleotide bound at the specificity site determines substrate preference. It seems probable that ATP makes the enzyme reduce CDP and UDP, dGTP favors ADP reduction and dTTP favors GDP reduction. Stimulated by ATP and inhibited by dATP binding to the activity site. Functionally, provides the precursors necessary for DNA synthesis. Catalyzes the biosynthesis of deoxyribonucleotides from the corresponding ribonucleotides. The polypeptide is Ribonucleoside-diphosphate reductase large subunit (rrm1) (Danio rerio (Zebrafish)).